We begin with the raw amino-acid sequence, 338 residues long: Popeye domain-containing protein 1-A (338 aa).

Over M1–H40 the chain is Extracellular. Residues N21 and N29 are each glycosylated (N-linked (GlcNAc...) asparagine). The chain crosses the membrane as a helical span at residues H41–L61. Over N62 to M65 the chain is Cytoplasmic. Residues L66–F86 traverse the membrane as a helical segment. Over R87–D91 the chain is Extracellular. Residues I92 to Y112 form a helical membrane-spanning segment. Residues K113–C338 lie on the Cytoplasmic side of the membrane. The tract at residues T296–R317 is disordered. Polar residues predominate over residues L307–R317.

The protein belongs to the popeye family. Expressed in the heart.

It localises to the lateral cell membrane. The protein localises to the cell junction. It is found in the tight junction. The protein resides in the membrane. Functionally, cell adhesion molecule involved in the establishment and/or maintenance of cell integrity. Plays a role in vamp3-mediated vesicular transport and recycling of different receptor molecules. May be involved in the formation and regulation of the tight junction (TJ) paracellular permeability barrier in epithelial cells. May induce primordial adhesive contact and aggregation of epithelial cells in a Ca(2+)-independent manner. May be involved in epithelial movement during corneal sheet formation and regeneration. May play a role in the regulation of cell shape and movement by modulating the Rho-GTPase activity. May also be involved in striated muscle regeneration and in the regulation of cell spreading. This chain is Popeye domain-containing protein 1-A (popdc1-a), found in Xenopus laevis (African clawed frog).